A 514-amino-acid chain; its full sequence is Serine/threonine-protein kinase 33 (514 aa).

Residues 65–86 show a composition bias toward basic and acidic residues; it reads INRDITSRKDLPSRTSNVERKA. Positions 65-91 are disordered; sequence INRDITSRKDLPSRTSNVERKASQQQW. In terms of domain architecture, Protein kinase spans 116–381; that stretch reads YTFGRILGKG…AKELLDNQWL (266 aa). ATP contacts are provided by residues 122 to 130 and K145; that span reads LGKGSFGIV. D238 serves as the catalytic Proton acceptor. Disordered regions lie at residues 402 to 468 and 485 to 514; these read KNNP…DMCS and MEKTPVTPSQGTATKYPAKSGALSRTKKKL. S407 carries the post-translational modification Phosphoserine. Residues 413–426 show a composition bias toward basic and acidic residues; sequence TEEKNKPSTEEKLK. Positions 449–468 are enriched in polar residues; the sequence is STAYEKQFPATSKDNFDMCS.

This sequence belongs to the protein kinase superfamily. CAMK Ser/Thr protein kinase family. CaMK subfamily. In terms of assembly, homodimer. Autophosphorylated. In terms of tissue distribution, highly expressed in testis, fetal lung and heart, followed by pituitary gland, kidney, interventricular septum, pancreas, heart, trachea, thyroid gland and uterus. Weak hybridization signals were observed in the following tissues: amygdala, aorta, esophagus, colon ascending, colon transverse, skeletal muscle, spleen, peripheral blood leukocyte, lymph node, bone marrow, placenta, prostate, liver, salivary gland, mammary gland, some tumor cell lines, fetal brain, fetal liver, fetal spleen and fetal thymus. No signal at all was detectable in RNA from tissues of the nervous system.

It is found in the cytoplasm. The protein localises to the cytoskeleton. The protein resides in the perinuclear region. It carries out the reaction L-seryl-[protein] + ATP = O-phospho-L-seryl-[protein] + ADP + H(+). It catalyses the reaction L-threonyl-[protein] + ATP = O-phospho-L-threonyl-[protein] + ADP + H(+). With respect to regulation, specifically inhibited by CDD-2807 ((3-([1,1'-Biphenyl]-2-ylethynyl)-1H-indazol-5-yl)(2,6-diazaspiro[3.5]nonan-2-yl)methanone). Its function is as follows. Serine/threonine protein kinase required for spermatid differentiation and male fertility. Promotes sperm flagella assembly during spermatogenesis by mediating phosphorylation of fibrous sheath proteins AKAP3 and AKAP4. Also phosphorylates vimentin/VIM, thereby regulating the dynamic behavior of the intermediate filament cytoskeleton. This is Serine/threonine-protein kinase 33 from Homo sapiens (Human).